A 495-amino-acid chain; its full sequence is tRNA-guanine(15) transglycosylase (495 aa).

D83 (nucleophile) is an active-site residue. A substrate-binding site is contributed by D118. Zn(2+) is bound by residues C273 and C278.

Belongs to the archaeosine tRNA-ribosyltransferase family. Requires Zn(2+) as cofactor.

The enzyme catalyses guanosine(15) in tRNA + 7-cyano-7-deazaguanine = 7-cyano-7-carbaguanosine(15) in tRNA + guanine. It participates in tRNA modification; archaeosine-tRNA biosynthesis. Functionally, exchanges the guanine residue with 7-cyano-7-deazaguanine (preQ0) at position 15 in the dihydrouridine loop (D-loop) of archaeal tRNAs. This is tRNA-guanine(15) transglycosylase from Pyrobaculum aerophilum (strain ATCC 51768 / DSM 7523 / JCM 9630 / CIP 104966 / NBRC 100827 / IM2).